The primary structure comprises 1581 residues: MFLCFCAATVLCFWINSGGADVVPNGTLIFSEPVPYPFSLDVLRSFSQHVVLRNKRAVTTISWSYSYQITTSSLSVNSWYVTFTAPLGWNYYTGQSFGTVLNQNAMMRASQSTFTYDVISYVGQRPNLDCQVNSLVNGGLDGWYSTVRVDNCFNAPCHVGGRPGCSIGLPYMSNGVCTRVLSTTQSPGLQYEIYSGQQFAVYQITPYTQYTITMPSGILGYCQQTPLYVDCGTWTPFRVHSYGCDKVTQNCKYTLTSNWVVAFQNKATAVILPSELIVPVAQKVTRRLGVNTPDYFWLVKQAYHYLSQANLSPNYALFSALCNSLYQQSATLSTLCFGSPFFVAQECYNNALYLPDAVFTTLFSTLFSWDYQINYPLNQVLTQNETFLQLPATNYQGQTLSQGRMLNLFKDAIVFLDFFDTKFYRTNDAPSSDIFVVVARQAQLIRYGNFRIEQINGYFQVKCSSNIISTLEPHPAGVIMIARHHSMWSVAARNSTSFYCVTHSLTTFGKLDISTSWFFHTLALPSGPVSQVSMPLLSTAAVGVYMHPMIEHWIPLLTLAQSQYQPSFFNIGINKTITLTTQLQAYAQVYTAWFLSVIYVRLPEARRLTLGVQLVPFIQALLSIKQADLDATDVDSVARYNVLSLMWGRKYAVVNYNQLPEWTYPLFKGEIGESMWFRKKIMPTTEGCQTSAHFSSITGYLQFSDYVYIPKYNKVSCPISTLAPSVLQVYEVQSLFVILIQCVSGSYDWYPGLSGGTAFVYKSYKLGTVCVLLPSDVLSTGPNIGFYSGTALSIVTVQTTNDVLPNCIGLVQDNIFTPCHPSGCPVRNSYDNYIVCFDSSTYTFKNYHRTTPPVMNVPIQEVPLQMEIPTVILQSYELKHTESVLLQDIEGGIIVDHNTGSIWYPDGQAYDVSFYVSVIIRYAPPKLELPSTLANFTSCLDYICFGNYQCRTEAQTFCTSMDYFEQVFNKSLISLKTALQDLHYVLKLVLPETTLELTELTRRRRRAVYEFDDTISLLSESFERFMSPASQAYMANMLWWDDAFDGFSLPQRTGSILSRSPSLSSVSSWNSYTSRTPLISNVKTPKTTFNVKLSMPKLPKASTLSKIGSVLSSGLSIASLGLSIFSIVEDRRVTELTQQQIMALEDQITILTDYTEKNFKEIQSSLNTLGQQVQDFSQQVTMSLQQLSNGLEQITQQLDKSIYYVTATQQYATYMSSLINHLTELAAAVYKTQDMYVTCIHSLQSGVLSPNCITPSQIFQLYQVARNLSGQCQPIFSEREVSRFYSLPLVTDAMVHNDTYWFSWSIPITCSNIQGSVYKVQPGYIVNPTHPTSLQYDLPSHVVTSNAGALRFDDHYCDRYNQVYLCTKSAFDLQPSNYLTMLYSNISENVSLTFHPEPRPDPCVYLSSSALYCYYSDQCNQCVVAVGNCSNQTVTYRNYTYPIMDPQCRGFDQITISSPIDIGVDFTALPSRPPLPLHLSYVNVTFNVTIPHGLNWTDLVLDYSFKDKIYEISKNITDLHQQILQVSSWASGWFQRIRDFLYNLLPTWITWLTLGFSLFSIVISGINIILFFEMNGKVKKS.

An N-terminal signal peptide occupies residues 1–20 (MFLCFCAATVLCFWINSGGA). Residues 21–1551 (DVVPNGTLIF…YNLLPTWITW (1531 aa)) lie on the Virion surface side of the membrane. N-linked (GlcNAc...) asparagine; by host glycans are attached at residues N25, N384, N494, N574, N935, N969, N1267, N1297, N1385, N1389, N1428, N1431, N1438, N1483, N1487, N1495, and N1515. The helical transmembrane segment at 1552 to 1572 (LTLGFSLFSIVISGINIILFF) threads the bilayer. The Intravirion portion of the chain corresponds to 1573–1581 (EMNGKVKKS).

Belongs to the toroviruses spike protein family. In terms of assembly, homotrimer.

It localises to the virion membrane. Mediates the binding of virions to the host cell receptor and is involved in membrane fusion. In Berne virus (BEV), this protein is Spike glycoprotein (S).